A 497-amino-acid chain; its full sequence is Probable malate:quinone oxidoreductase (497 aa).

Belongs to the MQO family. Requires FAD as cofactor.

It carries out the reaction (S)-malate + a quinone = a quinol + oxaloacetate. It functions in the pathway carbohydrate metabolism; tricarboxylic acid cycle; oxaloacetate from (S)-malate (quinone route): step 1/1. This chain is Probable malate:quinone oxidoreductase, found in Prochlorococcus marinus subsp. pastoris (strain CCMP1986 / NIES-2087 / MED4).